The primary structure comprises 125 residues: Histone H2A (125 aa).

Residues M1 to S18 show a composition bias toward basic residues. Positions M1 to L23 are disordered. S2 is subject to N-acetylserine. Phosphoserine is present on S2. Q104 bears the N5-methylglutamine mark.

The protein belongs to the histone H2A family. As to quaternary structure, the nucleosome is a histone octamer containing two molecules each of H2A, H2B, H3 and H4 assembled in one H3-H4 heterotetramer and two H2A-H2B heterodimers. The octamer wraps approximately 147 bp of DNA.

The protein localises to the nucleus. Its subcellular location is the chromosome. Its function is as follows. Core component of nucleosome. Nucleosomes wrap and compact DNA into chromatin, limiting DNA accessibility to the cellular machineries which require DNA as a template. Histones thereby play a central role in transcription regulation, DNA repair, DNA replication and chromosomal stability. DNA accessibility is regulated via a complex set of post-translational modifications of histones, also called histone code, and nucleosome remodeling. The chain is Histone H2A from Urechis caupo (Innkeeper worm).